Reading from the N-terminus, the 726-residue chain is Ribonuclease R (726 aa).

The region spanning 264 to 592 (RKDLTELAFV…TVHRLLWMNL (329 aa)) is the RNB domain. An S1 motif domain is found at 645 to 726 (GQTFHGFISA…VQKRAILTLV (82 aa)).

This sequence belongs to the RNR ribonuclease family. RNase R subfamily.

Its subcellular location is the cytoplasm. The catalysed reaction is Exonucleolytic cleavage in the 3'- to 5'-direction to yield nucleoside 5'-phosphates.. 3'-5' exoribonuclease that releases 5'-nucleoside monophosphates and is involved in maturation of structured RNAs. This is Ribonuclease R from Mycoplasma pneumoniae (strain ATCC 29342 / M129 / Subtype 1) (Mycoplasmoides pneumoniae).